A 72-amino-acid polypeptide reads, in one-letter code: Small, acid-soluble spore protein 1 (72 aa).

Belongs to the alpha/beta-type SASP family.

Functionally, SASP are bound to spore DNA. They are double-stranded DNA-binding proteins that cause DNA to change to an a-like conformation. They protect the DNA backbone from chemical and enzymatic cleavage and are thus involved in dormant spore's high resistance to UV light. This is Small, acid-soluble spore protein 1 (Sh-1) from Halobacillus halophilus (strain ATCC 35676 / DSM 2266 / JCM 20832 / KCTC 3685 / LMG 17431 / NBRC 102448 / NCIMB 2269) (Sporosarcina halophila).